The following is a 248-amino-acid chain: MRTAIIAGNWKMNKTVKEAVELVKELKPLVKDAKCDVVVCPTYVCLPAVLEEVKGSNIKVGAQNMHFEESGAYTGEISPKMLEELGVHYVIIGHSERRQYFNETDETVNKKVKKAFEHNLIPIVCCGESLEQREGNVTEKVLEGQIKVDLKELSKEQVEKLVIAYEPIWAIGTGKTATDEQANETIGYIRTVVKSMYGEDVASKVRIQYGGSVKPGTIKAQMAKEEIDGALVGGASLKAEDFSAIVNF.

Position 9 to 11 (9 to 11 (NWK)) interacts with substrate. The active-site Electrophile is His-94. The Proton acceptor role is filled by Glu-166. Substrate-binding positions include Gly-172, Ser-212, and 233 to 234 (GG).

The protein belongs to the triosephosphate isomerase family. As to quaternary structure, homodimer.

The protein resides in the cytoplasm. It carries out the reaction D-glyceraldehyde 3-phosphate = dihydroxyacetone phosphate. It functions in the pathway carbohydrate biosynthesis; gluconeogenesis. Its pathway is carbohydrate degradation; glycolysis; D-glyceraldehyde 3-phosphate from glycerone phosphate: step 1/1. Involved in the gluconeogenesis. Catalyzes stereospecifically the conversion of dihydroxyacetone phosphate (DHAP) to D-glyceraldehyde-3-phosphate (G3P). The protein is Triosephosphate isomerase of Clostridium botulinum (strain Loch Maree / Type A3).